A 138-amino-acid chain; its full sequence is Probable DNA-directed RNA polymerases I, II, and III subunit RPABC2 (138 aa).

Acidic residues-rich tracts occupy residues 1–27 (MADDDDYQDMDNDDFVDDNEMEDVIEE) and 35–46 (EEEDDDNNVDEN). A disordered region spans residues 1 to 46 (MADDDDYQDMDNDDFVDDNEMEDVIEEEQQRPDHEEEDDDNNVDEN).

It belongs to the archaeal Rpo6/eukaryotic RPB6 RNA polymerase subunit family. As to quaternary structure, component of the RNA polymerase I (Pol I), RNA polymerase II (Pol II) and RNA polymerase III (Pol III) complexes consisting of at least 13, 12 and 17 subunits, respectively.

The protein resides in the nucleus. Its function is as follows. DNA-dependent RNA polymerases catalyze the transcription of DNA into RNA using the four ribonucleoside triphosphates as substrates. Common component of RNA polymerases I, II and III which synthesize ribosomal RNA precursors, mRNA precursors and many functional non-coding RNAs, and small RNAs, such as 5S rRNA and tRNAs, respectively. Pol II is the central component of the basal RNA polymerase II transcription machinery. Pols are composed of mobile elements that move relative to each other. In Pol II, RPB6 is part of the clamp element and together with parts of RPB1 and RPB2 forms a pocket to which the RPB4-RPB7 subcomplex binds. This Caenorhabditis briggsae protein is Probable DNA-directed RNA polymerases I, II, and III subunit RPABC2.